A 400-amino-acid polypeptide reads, in one-letter code: Probable S-adenosylmethionine synthase (400 aa).

135 to 140 contributes to the ATP binding site; it reads KPGSKD.

This sequence belongs to the AdoMet synthase 2 family. Mg(2+) serves as cofactor.

It catalyses the reaction L-methionine + ATP + H2O = S-adenosyl-L-methionine + phosphate + diphosphate. Its pathway is amino-acid biosynthesis; S-adenosyl-L-methionine biosynthesis; S-adenosyl-L-methionine from L-methionine: step 1/1. Catalyzes the formation of S-adenosylmethionine from methionine and ATP. The sequence is that of Probable S-adenosylmethionine synthase (mat) from Aquifex aeolicus (strain VF5).